Here is a 323-residue protein sequence, read N- to C-terminus: Beta-ketoacyl-[acyl-carrier-protein] synthase III (323 aa).

Catalysis depends on residues C113 and H250. Residues 251–255 are ACP-binding; it reads QANRR. Residue N280 is part of the active site.

It belongs to the thiolase-like superfamily. FabH family. In terms of assembly, homodimer.

The protein resides in the cytoplasm. It catalyses the reaction malonyl-[ACP] + acetyl-CoA + H(+) = 3-oxobutanoyl-[ACP] + CO2 + CoA. The protein operates within lipid metabolism; fatty acid biosynthesis. Catalyzes the condensation reaction of fatty acid synthesis by the addition to an acyl acceptor of two carbons from malonyl-ACP. Catalyzes the first condensation reaction which initiates fatty acid synthesis and may therefore play a role in governing the total rate of fatty acid production. Possesses both acetoacetyl-ACP synthase and acetyl transacylase activities. Its substrate specificity determines the biosynthesis of branched-chain and/or straight-chain of fatty acids. This chain is Beta-ketoacyl-[acyl-carrier-protein] synthase III, found in Rhizobium rhizogenes (strain K84 / ATCC BAA-868) (Agrobacterium radiobacter).